A 430-amino-acid chain; its full sequence is Adenylosuccinate synthetase (430 aa).

Residues 12–18 (GDEGKGK) and 40–42 (GHT) each bind GTP. The Proton acceptor role is filled by Asp13. Mg(2+)-binding residues include Asp13 and Gly40. Residues 13-16 (DEGK), 38-41 (NAGH), Thr128, Arg142, Gln223, Thr238, and Arg302 each bind IMP. Catalysis depends on His41, which acts as the Proton donor. 298–304 (TTTGRPR) contributes to the substrate binding site. GTP contacts are provided by residues Arg304, 330–332 (SID), and 413–415 (SVG).

This sequence belongs to the adenylosuccinate synthetase family. Homodimer. The cofactor is Mg(2+).

The protein resides in the cytoplasm. The enzyme catalyses IMP + L-aspartate + GTP = N(6)-(1,2-dicarboxyethyl)-AMP + GDP + phosphate + 2 H(+). It functions in the pathway purine metabolism; AMP biosynthesis via de novo pathway; AMP from IMP: step 1/2. Plays an important role in the de novo pathway of purine nucleotide biosynthesis. Catalyzes the first committed step in the biosynthesis of AMP from IMP. The chain is Adenylosuccinate synthetase from Lactococcus lactis subsp. lactis (strain IL1403) (Streptococcus lactis).